The primary structure comprises 288 residues: Geranylgeranyl diphosphate synthase (288 aa).

Residues Arg43 and His73 each coordinate isopentenyl diphosphate. Positions 80 and 86 each coordinate Mg(2+). Arg91 contacts (2E,6E)-farnesyl diphosphate. Arg92 contributes to the isopentenyl diphosphate binding site. Residues Lys170, Thr171, and Gln205 each contribute to the (2E,6E)-farnesyl diphosphate site.

This sequence belongs to the FPP/GGPP synthase family. Mg(2+) serves as cofactor.

It catalyses the reaction isopentenyl diphosphate + (2E,6E)-farnesyl diphosphate = (2E,6E,10E)-geranylgeranyl diphosphate + diphosphate. The protein operates within isoprenoid biosynthesis; geranylgeranyl diphosphate biosynthesis; geranylgeranyl diphosphate from farnesyl diphosphate and isopentenyl diphosphate: step 1/1. In terms of biological role, catalyzes the condensation of farnesyl diphosphate (FPP) and isopentenyl diphosphate (IPP) to yield geranylgeranyl diphosphate (GGPP) needed for biosynthesis of carotenoids and diterpenes. The protein is Geranylgeranyl diphosphate synthase (crtE) of Cereibacter sphaeroides (strain ATCC 17023 / DSM 158 / JCM 6121 / CCUG 31486 / LMG 2827 / NBRC 12203 / NCIMB 8253 / ATH 2.4.1.) (Rhodobacter sphaeroides).